Here is a 439-residue protein sequence, read N- to C-terminus: MHRYFERVNRISYEGRQSNNPLAFRHYNPEEIILGKKMKDHLRFAVCYWHNFCWDGTDMFGSGAFERFWQKGGDALELAKLKADVAFEFFYKLNIPFYCFHDIDVAPEGCSLKEYIYNLGVMSDILADKQAETGVKLLWGTANCFTHPRYAAGASTNPDLNIFAYASAQVCQVMQMTKKLGGENYVLWGGREGYESLLNTDLRQEREQIGRFMQMVVDYKYKIGFQGTLLIEPKPQEPTKHQYDYDVATVYGFLKQFGLENEIKVNIEANHATLAGHSFQHEVATAIALGILGSIDANRGDAQLGWDTDQFPNSVEENSLVMYEILKAGGFTTGGLNFDAKVRRQSIDIDDLFYGHIGAIDTMALSLKSAVKILVDGKLDEYVAQRYSGWNSELGRDILEGKMTLDEVAHYAETLVQEPKHRSGQQELLENLINRYIYD.

Residues His-101 and Asp-104 contribute to the active site. Mg(2+) contacts are provided by Glu-232, Glu-268, His-271, Asp-296, Asp-307, Asp-309, and Asp-339.

It belongs to the xylose isomerase family. In terms of assembly, homotetramer. Mg(2+) serves as cofactor.

The protein resides in the cytoplasm. It carries out the reaction alpha-D-xylose = alpha-D-xylulofuranose. The chain is Xylose isomerase from Photorhabdus laumondii subsp. laumondii (strain DSM 15139 / CIP 105565 / TT01) (Photorhabdus luminescens subsp. laumondii).